The following is a 119-amino-acid chain: DNA-binding protein inhibitor ID-3 (119 aa).

Residues 28 to 80 (RGKGPAAEEPLSLLDDMNHCYSRLRELVPGVPRGTQLSQVEILQRVIDYILDL) enclose the bHLH domain.

Homodimer, and heterodimer with other HLH proteins. Interacts with COPS5 and COPS7A. Interacts with IFI204. Interacts with GATA4 and NKX2-5. Interacts with ANKRD2; both proteins cooperate in myoblast differentiation. Interacts with CLOCK and BMAL1.

The protein localises to the nucleus. Functionally, transcriptional regulator (lacking a basic DNA binding domain) which negatively regulates the basic helix-loop-helix (bHLH) transcription factors by forming heterodimers and inhibiting their DNA binding and transcriptional activity. Implicated in regulating a variety of cellular processes, including cellular growth, senescence, differentiation, apoptosis, angiogenesis, and neoplastic transformation. Involved in myogenesis by inhibiting skeletal muscle and cardiac myocyte differentiation and promoting muscle precursor cells proliferation. Inhibits the binding of E2A-containing protein complexes to muscle creatine kinase E-box enhancer. Regulates the circadian clock by repressing the transcriptional activator activity of the CLOCK-BMAL1 heterodimer. The protein is DNA-binding protein inhibitor ID-3 (ID3) of Canis lupus familiaris (Dog).